A 149-amino-acid chain; its full sequence is Deoxyuridine 5'-triphosphate nucleotidohydrolase (149 aa).

Substrate-binding positions include 68–70 (RSG), N81, and 85–87 (LID).

This sequence belongs to the dUTPase family. Mg(2+) serves as cofactor.

It catalyses the reaction dUTP + H2O = dUMP + diphosphate + H(+). It participates in pyrimidine metabolism; dUMP biosynthesis; dUMP from dCTP (dUTP route): step 2/2. This enzyme is involved in nucleotide metabolism: it produces dUMP, the immediate precursor of thymidine nucleotides and it decreases the intracellular concentration of dUTP so that uracil cannot be incorporated into DNA. The sequence is that of Deoxyuridine 5'-triphosphate nucleotidohydrolase from Aromatoleum aromaticum (strain DSM 19018 / LMG 30748 / EbN1) (Azoarcus sp. (strain EbN1)).